We begin with the raw amino-acid sequence, 282 residues long: Bis(5'-nucleosyl)-tetraphosphatase, symmetrical (282 aa).

It belongs to the Ap4A hydrolase family.

It carries out the reaction P(1),P(4)-bis(5'-adenosyl) tetraphosphate + H2O = 2 ADP + 2 H(+). Its function is as follows. Hydrolyzes diadenosine 5',5'''-P1,P4-tetraphosphate to yield ADP. In Escherichia coli O7:K1 (strain IAI39 / ExPEC), this protein is Bis(5'-nucleosyl)-tetraphosphatase, symmetrical.